The following is a 263-amino-acid chain: Small ribosomal subunit protein eS4 (263 aa).

An S4 RNA-binding domain is found at 42-104; the sequence is LPLIVFLRNR…TGEHFRLVYD (63 aa).

This sequence belongs to the eukaryotic ribosomal protein eS4 family.

The sequence is that of Small ribosomal subunit protein eS4 (RPS4Y1) from Pan paniscus (Pygmy chimpanzee).